We begin with the raw amino-acid sequence, 291 residues long: Formamidopyrimidine-DNA glycosylase (291 aa).

The active-site Schiff-base intermediate with DNA is Pro-2. Glu-3 functions as the Proton donor in the catalytic mechanism. Residue Lys-58 is the Proton donor; for beta-elimination activity of the active site. DNA contacts are provided by His-100, Arg-123, and Lys-166. The FPG-type zinc finger occupies 257–291 (SVYGREGKECLQCGTPIIRILQSGRSSFYCSQCQK). Arg-281 functions as the Proton donor; for delta-elimination activity in the catalytic mechanism.

This sequence belongs to the FPG family. Monomer. It depends on Zn(2+) as a cofactor.

It carries out the reaction Hydrolysis of DNA containing ring-opened 7-methylguanine residues, releasing 2,6-diamino-4-hydroxy-5-(N-methyl)formamidopyrimidine.. The enzyme catalyses 2'-deoxyribonucleotide-(2'-deoxyribose 5'-phosphate)-2'-deoxyribonucleotide-DNA = a 3'-end 2'-deoxyribonucleotide-(2,3-dehydro-2,3-deoxyribose 5'-phosphate)-DNA + a 5'-end 5'-phospho-2'-deoxyribonucleoside-DNA + H(+). In terms of biological role, involved in base excision repair of DNA damaged by oxidation or by mutagenic agents. Acts as a DNA glycosylase that recognizes and removes damaged bases. Has a preference for oxidized purines, such as 7,8-dihydro-8-oxoguanine (8-oxoG). Has AP (apurinic/apyrimidinic) lyase activity and introduces nicks in the DNA strand. Cleaves the DNA backbone by beta-delta elimination to generate a single-strand break at the site of the removed base with both 3'- and 5'-phosphates. The chain is Formamidopyrimidine-DNA glycosylase from Bartonella tribocorum (strain CIP 105476 / IBS 506).